A 176-amino-acid polypeptide reads, in one-letter code: uncharacterized protein (176 aa).

This is an uncharacterized protein from Treponema pallidum (strain Nichols).